A 454-amino-acid polypeptide reads, in one-letter code: Glycosyl hydrolase family 109 protein (454 aa).

Positions 1-29 (MFAMKRREFIAASAAVAASSLLPQTPAWA) form a signal peptide, tat-type signal. NAD(+)-binding positions include 43 to 44 (MR), aspartate 65, 116 to 119 (WEYH), 136 to 137 (EV), and asparagine 165. Tyrosine 194 contacts substrate. 224-228 (SEARW) is an NAD(+) binding site. Substrate is bound by residues arginine 229, 241 to 244 (YPSH), and tyrosine 324. Position 241 (tyrosine 241) interacts with NAD(+).

Belongs to the Gfo/Idh/MocA family. Glycosyl hydrolase 109 subfamily. The cofactor is NAD(+). In terms of processing, predicted to be exported by the Tat system. The position of the signal peptide cleavage has not been experimentally proven.

Functionally, glycosidase. The sequence is that of Glycosyl hydrolase family 109 protein from Stenotrophomonas maltophilia (strain K279a).